We begin with the raw amino-acid sequence, 315 residues long: MYDWLNALPKAELHLHLEGSLEPELLFALAERNKIALPWNDVETLRGAYAFNNLQEFLDLYYQGADVLRTEQDFYDLTWAYLQRCKAQNVVHTEPFFDPQTHTDRGIAFEVVLNGISQALKDGREQLGISSGLILSFLRHLSEDEAHKTLDQALPFRDAFIAVGLDSSEMGHPPRKFQRVFDRARSEGFVAVAHAGEEGPPEYIWEALDLLKIKRIDHGVRAIEDERLMQRIIEEQIPLTVCPLSNTKLCVFDHMSQHNILDMLERGVKVTVNSDDPAYFGGYVTENFHALHTHLGMTEDQARRLAQNSLDARLI.

His14, His16, and His194 together coordinate Zn(2+). Glu197 serves as the catalytic Proton donor. Position 275 (Asp275) interacts with Zn(2+). Substrate is bound at residue Asp276.

Belongs to the metallo-dependent hydrolases superfamily. Adenosine and AMP deaminases family. Adenine deaminase type 2 subfamily. The cofactor is Zn(2+).

It carries out the reaction adenine + H2O + H(+) = hypoxanthine + NH4(+). Catalyzes the hydrolytic deamination of adenine to hypoxanthine. Plays an important role in the purine salvage pathway and in nitrogen catabolism. The sequence is that of Adenine deaminase from Pseudomonas putida (strain GB-1).